Reading from the N-terminus, the 1661-residue chain is Mediator of RNA polymerase II transcription subunit 12 (1661 aa).

Disordered stretches follow at residues 1–22 (MSKT…VSNS), 524–550 (KDRR…ITGK), and 1501–1527 (DDMT…PDGT). Polar residues-rich tracts occupy residues 7-22 (RNSL…VSNS), 539-548 (DTKNNYNSIT), and 1505-1527 (TDTS…PDGT).

This sequence belongs to the Mediator complex subunit 12 family. In terms of assembly, component of the SRB8-11 complex, which itself associates with the Mediator complex.

The protein localises to the nucleus. Component of the SRB8-11 complex. The SRB8-11 complex is a regulatory module of the Mediator complex which is itself involved in regulation of basal and activated RNA polymerase II-dependent transcription. The SRB8-11 complex may be involved in the transcriptional repression of a subset of genes regulated by Mediator. It may inhibit the association of the Mediator complex with RNA polymerase II to form the holoenzyme complex. In Debaryomyces hansenii (strain ATCC 36239 / CBS 767 / BCRC 21394 / JCM 1990 / NBRC 0083 / IGC 2968) (Yeast), this protein is Mediator of RNA polymerase II transcription subunit 12 (SRB8).